Consider the following 273-residue polypeptide: Large ribosomal subunit protein uL2cy (273 aa).

Disordered regions lie at residues 1–22 and 224–273; these read MAIH…DSQV and NPVD…RRRK.

It belongs to the universal ribosomal protein uL2 family. Part of the 50S ribosomal subunit.

Its subcellular location is the plastid. It localises to the chloroplast. The sequence is that of Large ribosomal subunit protein uL2cy (rpl2-B) from Chloranthus spicatus (Chulantree).